Consider the following 168-residue polypeptide: Small ribosomal subunit protein bS16 (168 aa).

The disordered stretch occupies residues Leu-110–Gly-168.

It belongs to the bacterial ribosomal protein bS16 family.

This is Small ribosomal subunit protein bS16 from Mycobacterium sp. (strain JLS).